A 364-amino-acid polypeptide reads, in one-letter code: DNA replication and repair protein RecF (364 aa).

Residue 30 to 37 (GDNGAGKT) participates in ATP binding.

It belongs to the RecF family.

It is found in the cytoplasm. Functionally, the RecF protein is involved in DNA metabolism; it is required for DNA replication and normal SOS inducibility. RecF binds preferentially to single-stranded, linear DNA. It also seems to bind ATP. This is DNA replication and repair protein RecF from Stenotrophomonas maltophilia (strain K279a).